The following is a 174-amino-acid chain: Probable NAD(P)H dehydrogenase subunit CRR3, chloroplastic (174 aa).

The transit peptide at 1 to 54 (MAVLSTIYSITRASTPTMASLTNDSPSPLPSSSPSKLPSPTSPSKKPLKLRQVS) directs the protein to the chloroplast. A compositionally biased stretch (polar residues) spans 14–24 (STPTMASLTND). A disordered region spans residues 14 to 71 (STPTMASLTNDSPSPLPSSSPSKLPSPTSPSKKPLKLRQVSKQMGSQNQQRRGNKPSI). A compositionally biased stretch (low complexity) spans 30–45 (PSSSPSKLPSPTSPSK). Polar residues predominate over residues 53–64 (VSKQMGSQNQQR). A helical membrane pass occupies residues 140 to 160 (FTIQWILPIWIMSLLVACGVI).

The protein resides in the plastid. The protein localises to the chloroplast thylakoid membrane. Functionally, probable subunit of the chloroplast NAD(P)H dehydrogenase (NDH) complex of the photosynthetic electron transport chain. Required for both formation and activity of NDH. May function in assembly or stabilization of the NDH complex. The sequence is that of Probable NAD(P)H dehydrogenase subunit CRR3, chloroplastic from Arabidopsis thaliana (Mouse-ear cress).